A 156-amino-acid polypeptide reads, in one-letter code: Small ribosomal subunit protein uS11 (156 aa).

Residues 1 to 27 (MSEKEQKEVEAKESSGKAEERRETREK) are disordered.

This sequence belongs to the universal ribosomal protein uS11 family. In terms of assembly, part of the 30S ribosomal subunit.

Functionally, located on the platform of the 30S subunit. This Thermofilum pendens (strain DSM 2475 / Hrk 5) protein is Small ribosomal subunit protein uS11.